The primary structure comprises 289 residues: Esterase GA18864 (289 aa).

The span at 1–19 shows a compositional bias: low complexity; that stretch reads MTNNDAAVEAPSSSRASSS. Residues 1–24 form a disordered region; it reads MTNNDAAVEAPSSSRASSSKQQPK. Active-site charge relay system residues include Ser-133, Asp-191, and His-218. The tract at residues 253–289 is disordered; the sequence is VSFIESGAEDNDDDGDANDAEVAAATAAAGSDLDDSD. The span at 259–271 shows a compositional bias: acidic residues; that stretch reads GAEDNDDDGDAND. Positions 272-283 are enriched in low complexity; it reads AEVAAATAAAGS.

Belongs to the LovG family.

The chain is Esterase GA18864 from Drosophila pseudoobscura pseudoobscura (Fruit fly).